A 333-amino-acid chain; its full sequence is Anthranilate phosphoribosyltransferase (333 aa).

5-phospho-alpha-D-ribose 1-diphosphate contacts are provided by residues Gly-78, 81–82 (GD), Thr-86, 88–91 (NVST), 106–114 (KHGNYSVSS), and Ser-118. Gly-78 serves as a coordination point for anthranilate. Ser-90 contributes to the Mg(2+) binding site. Asn-109 lines the anthranilate pocket. Residue Arg-164 participates in anthranilate binding. Positions 222 and 223 each coordinate Mg(2+).

Belongs to the anthranilate phosphoribosyltransferase family. As to quaternary structure, homodimer. It depends on Mg(2+) as a cofactor.

The catalysed reaction is N-(5-phospho-beta-D-ribosyl)anthranilate + diphosphate = 5-phospho-alpha-D-ribose 1-diphosphate + anthranilate. Its pathway is amino-acid biosynthesis; L-tryptophan biosynthesis; L-tryptophan from chorismate: step 2/5. In terms of biological role, catalyzes the transfer of the phosphoribosyl group of 5-phosphorylribose-1-pyrophosphate (PRPP) to anthranilate to yield N-(5'-phosphoribosyl)-anthranilate (PRA). In Natronomonas pharaonis (strain ATCC 35678 / DSM 2160 / CIP 103997 / JCM 8858 / NBRC 14720 / NCIMB 2260 / Gabara) (Halobacterium pharaonis), this protein is Anthranilate phosphoribosyltransferase.